A 414-amino-acid chain; its full sequence is Probable peptidoglycan glycosyltransferase FtsW (414 aa).

Topologically, residues 1–12 (MRLSLPRLKMPR) are cytoplasmic. A helical membrane pass occupies residues 13–33 (LPGFSILVWISTALKGWVMGS). Topologically, residues 34-47 (REKDTDSLIMYDRT) are periplasmic. A helical membrane pass occupies residues 48–68 (LLWLTFGLAAIGFIMVTSASM). At 69-86 (PIGQRLTNDPFFFAKRDG) the chain is on the cytoplasmic side. The helical transmembrane segment at 87-107 (VYLILAFILAIITLRLPMEFW) threads the bilayer. Topologically, residues 108-111 (QRYS) are periplasmic. The helical transmembrane segment at 112–132 (ATMLLGSIILLMIVLVVGSSV) threads the bilayer. Residues 133-174 (KGASRWIDLGLLRIQPAELTKLSLFCYIANYLVRKGDEVRNN) are Cytoplasmic-facing. A helical membrane pass occupies residues 175–194 (LRGFLKPMGVILVLAVLLLA). The Periplasmic segment spans residues 195 to 197 (QPD). The chain crosses the membrane as a helical span at residues 198 to 217 (LGTVVVLFVTTLAMLFLAGA). Residue K218 is a topological domain, cytoplasmic. The chain crosses the membrane as a helical span at residues 219–239 (LWQFIAIIGMGISAVVLLILA). Topologically, residues 240–301 (EPYRIRRVTA…PEAHTDFIFA (62 aa)) are periplasmic. A helical membrane pass occupies residues 302 to 322 (IIGEELGYVGVVLALLMVFFV). Residues 323 to 342 (AFRAMSIGRKALEIDHRFSG) are Cytoplasmic-facing. The helical transmembrane segment at 343–363 (FLACSIGIWFSFQALVNVGAA) threads the bilayer. Residues 364–373 (AGMLPTKGLT) are Periplasmic-facing. The chain crosses the membrane as a helical span at residues 374–394 (LPLISYGGSSLLIMSTAIMML). Over 395–414 (LRIDYETRLEKAQAFVRGSR) the chain is Cytoplasmic.

The protein belongs to the SEDS family. FtsW subfamily.

Its subcellular location is the cell inner membrane. The catalysed reaction is [GlcNAc-(1-&gt;4)-Mur2Ac(oyl-L-Ala-gamma-D-Glu-L-Lys-D-Ala-D-Ala)](n)-di-trans,octa-cis-undecaprenyl diphosphate + beta-D-GlcNAc-(1-&gt;4)-Mur2Ac(oyl-L-Ala-gamma-D-Glu-L-Lys-D-Ala-D-Ala)-di-trans,octa-cis-undecaprenyl diphosphate = [GlcNAc-(1-&gt;4)-Mur2Ac(oyl-L-Ala-gamma-D-Glu-L-Lys-D-Ala-D-Ala)](n+1)-di-trans,octa-cis-undecaprenyl diphosphate + di-trans,octa-cis-undecaprenyl diphosphate + H(+). It participates in cell wall biogenesis; peptidoglycan biosynthesis. Peptidoglycan polymerase that is essential for cell division. The chain is Probable peptidoglycan glycosyltransferase FtsW from Escherichia coli O157:H7.